The primary structure comprises 344 residues: Oxygen sensor histidine kinase NreB (344 aa).

Cysteine 58, cysteine 61, cysteine 73, and cysteine 76 together coordinate [4Fe-4S] cluster. Residues 152-344 form the Histidine kinase domain; it reads RISRELHDSV…GTNVTLNIPI (193 aa). Histidine 158 carries the post-translational modification Phosphohistidine; by autocatalysis.

It depends on [4Fe-4S] cluster as a cofactor. Autophosphorylated.

It localises to the cytoplasm. It catalyses the reaction ATP + protein L-histidine = ADP + protein N-phospho-L-histidine.. In terms of biological role, member of the two-component regulatory system NreB/NreC involved in the control of dissimilatory nitrate/nitrite reduction in response to oxygen. NreB functions as a direct oxygen sensor histidine kinase which is autophosphorylated, in the absence of oxygen, probably at the conserved histidine residue, and transfers its phosphate group probably to a conserved aspartate residue of NreC. NreB/NreC activates the expression of the nitrate (narGHJI) and nitrite (nir) reductase operons, as well as the putative nitrate transporter gene narT. In Staphylococcus aureus (strain Mu3 / ATCC 700698), this protein is Oxygen sensor histidine kinase NreB (nreB).